A 644-amino-acid polypeptide reads, in one-letter code: Acetyl-coenzyme A synthetase (644 aa).

CoA contacts are provided by residues 190–193 and Thr-308; that span reads RGSK. ATP-binding positions include 384-386, 408-413, Asp-497, and Arg-512; these read GEP and DTWWQT. A CoA-binding site is contributed by Ser-520. Arg-523 is an ATP binding site. 3 residues coordinate Mg(2+): Val-534, His-536, and Val-539. Residue Arg-581 coordinates CoA. At Lys-606 the chain carries N6-acetyllysine.

Belongs to the ATP-dependent AMP-binding enzyme family. Mg(2+) is required as a cofactor. In terms of processing, acetylated. Deacetylation by the SIR2-homolog deacetylase activates the enzyme.

The enzyme catalyses acetate + ATP + CoA = acetyl-CoA + AMP + diphosphate. Its function is as follows. Catalyzes the conversion of acetate into acetyl-CoA (AcCoA), an essential intermediate at the junction of anabolic and catabolic pathways. AcsA undergoes a two-step reaction. In the first half reaction, AcsA combines acetate with ATP to form acetyl-adenylate (AcAMP) intermediate. In the second half reaction, it can then transfer the acetyl group from AcAMP to the sulfhydryl group of CoA, forming the product AcCoA. The sequence is that of Acetyl-coenzyme A synthetase from Magnetococcus marinus (strain ATCC BAA-1437 / JCM 17883 / MC-1).